The primary structure comprises 101 residues: Small ribosomal subunit protein uS14 (101 aa).

The disordered stretch occupies residues 1–25; sequence MAKVSAIQKNKSRQKKSQRLHNKRS. The span at 10 to 25 shows a compositional bias: basic residues; the sequence is NKSRQKKSQRLHNKRS.

Belongs to the universal ribosomal protein uS14 family. As to quaternary structure, part of the 30S ribosomal subunit. Contacts proteins S3 and S10.

Binds 16S rRNA, required for the assembly of 30S particles and may also be responsible for determining the conformation of the 16S rRNA at the A site. This chain is Small ribosomal subunit protein uS14, found in Rickettsia typhi (strain ATCC VR-144 / Wilmington).